A 411-amino-acid chain; its full sequence is Multifunctional CCA protein (411 aa).

The ATP site is built by Gly8 and Arg11. 2 residues coordinate CTP: Gly8 and Arg11. Mg(2+) is bound by residues Asp21 and Asp23. ATP is bound by residues Arg91, Arg143, and Arg146. CTP is bound by residues Arg91, Arg143, and Arg146. The HD domain occupies 232–333; that stretch reads TGVHVMMVID…MRLLERCDAL (102 aa).

It belongs to the tRNA nucleotidyltransferase/poly(A) polymerase family. Bacterial CCA-adding enzyme type 1 subfamily. Monomer. Can also form homodimers and oligomers. Requires Mg(2+) as cofactor. It depends on Ni(2+) as a cofactor.

The catalysed reaction is a tRNA precursor + 2 CTP + ATP = a tRNA with a 3' CCA end + 3 diphosphate. It catalyses the reaction a tRNA with a 3' CCA end + 2 CTP + ATP = a tRNA with a 3' CCACCA end + 3 diphosphate. Catalyzes the addition and repair of the essential 3'-terminal CCA sequence in tRNAs without using a nucleic acid template. Adds these three nucleotides in the order of C, C, and A to the tRNA nucleotide-73, using CTP and ATP as substrates and producing inorganic pyrophosphate. tRNA 3'-terminal CCA addition is required both for tRNA processing and repair. Also involved in tRNA surveillance by mediating tandem CCA addition to generate a CCACCA at the 3' terminus of unstable tRNAs. While stable tRNAs receive only 3'-terminal CCA, unstable tRNAs are marked with CCACCA and rapidly degraded. In Cupriavidus necator (strain ATCC 17699 / DSM 428 / KCTC 22496 / NCIMB 10442 / H16 / Stanier 337) (Ralstonia eutropha), this protein is Multifunctional CCA protein.